Reading from the N-terminus, the 160-residue chain is Small ribosomal subunit protein uS7 (160 aa).

Belongs to the universal ribosomal protein uS7 family. As to quaternary structure, part of the 30S ribosomal subunit. Contacts proteins S9 and S11.

Functionally, one of the primary rRNA binding proteins, it binds directly to 16S rRNA where it nucleates assembly of the head domain of the 30S subunit. Is located at the subunit interface close to the decoding center, probably blocks exit of the E-site tRNA. The sequence is that of Small ribosomal subunit protein uS7 from Rickettsia akari (strain Hartford).